Here is a 134-residue protein sequence, read N- to C-terminus: Large-conductance mechanosensitive channel (134 aa).

The next 2 membrane-spanning stretches (helical) occupy residues 16–36 (VIDLAVGVVIGAAFGKIVTAL) and 81–101 (GDFINTLIQFVIVAFAIFIVV).

It belongs to the MscL family. In terms of assembly, homopentamer.

The protein localises to the cell inner membrane. In terms of biological role, channel that opens in response to stretch forces in the membrane lipid bilayer. May participate in the regulation of osmotic pressure changes within the cell. The sequence is that of Large-conductance mechanosensitive channel from Stenotrophomonas maltophilia (strain K279a).